Reading from the N-terminus, the 550-residue chain is Leucine-rich repeat, immunoglobulin-like domain and transmembrane domain-containing protein 2 (550 aa).

The N-terminal stretch at 1-19 (MASVFHYFLLVLVFLDTHA) is a signal peptide. The 32-residue stretch at 23 to 54 (FCLPGCTCSEESFGRTLQCTSVSLGKIPGNLS) folds into the LRRNT domain. N-linked (GlcNAc...) asparagine glycosylation occurs at Asn-52. LRR repeat units lie at residues 80–103 (TLEY…EHLP), 104–125 (ELRE…AFRA), 128–149 (LLRV…ALQF), and 152–173 (SLTY…VFLN). In terms of domain architecture, LRRCT spans 200 to 252 (NPWVCDCRLRGLVQFVKSITLPVILVNSYLICQGPLSKAGQLFHETELSACMK). An Ig-like domain is found at 253-341 (PQISTPSANI…SIGKSNLVIS (89 aa)). An intrachain disulfide couples Cys-274 to Cys-327. Residues 361–451 (EGNAYIDLRV…QGQCVAFVTG (91 aa)) enclose the Fibronectin type-III domain. Residues 466–486 (VTVVLCVVLLAVPVGAYAWAA) form a helical membrane-spanning segment. Residues 508-550 (SCTPAAPQSKDGSFREHPAVCDDGEGHIDTEGDKEKGGTEDNS) are disordered. Residues 519 to 550 (GSFREHPAVCDDGEGHIDTEGDKEKGGTEDNS) are compositionally biased toward basic and acidic residues.

As to quaternary structure, interacts with LRIT1; may form a heterodimer with LRIT1.

It localises to the membrane. The chain is Leucine-rich repeat, immunoglobulin-like domain and transmembrane domain-containing protein 2 (LRIT2) from Homo sapiens (Human).